The chain runs to 391 residues: 23S rRNA (uracil(747)-C(5))-methyltransferase RlmC (391 aa).

Residues Cys5, Cys13, Cys16, and Cys95 each contribute to the [4Fe-4S] cluster site. Residues Gln220, Phe249, Glu276, and Asn322 each coordinate S-adenosyl-L-methionine. Cys349 serves as the catalytic Nucleophile.

Belongs to the class I-like SAM-binding methyltransferase superfamily. RNA M5U methyltransferase family. RlmC subfamily.

The enzyme catalyses uridine(747) in 23S rRNA + S-adenosyl-L-methionine = 5-methyluridine(747) in 23S rRNA + S-adenosyl-L-homocysteine + H(+). Functionally, catalyzes the formation of 5-methyl-uridine at position 747 (m5U747) in 23S rRNA. In Actinobacillus pleuropneumoniae serotype 3 (strain JL03), this protein is 23S rRNA (uracil(747)-C(5))-methyltransferase RlmC.